A 1021-amino-acid chain; its full sequence is Replication factor C subunit 1 (1021 aa).

Disordered regions lie at residues 1 to 259 (MSSD…EGAP) and 339 to 392 (PAKA…GSAS). The span at 90-110 (KVSDELEDDMKPLPAKEVHKE) shows a compositional bias: basic and acidic residues. Residues 123-138 (SKRKTPVKPPPSKKLK) are compositionally biased toward basic residues. A compositionally biased stretch (acidic residues) spans 197-207 (LDDDGEEDKMD). Residues 219-236 (RGRGGASGGRGRGGGGRG) are compositionally biased toward gly residues. Basic and acidic residues-rich tracts occupy residues 241-255 (GERK…KEVP) and 347-357 (HQSDKNSEKQQ). Positions 257–347 (GAPDCLTGLT…KPAKATVAKH (91 aa)) constitute a BRCT domain. Residues 374 to 392 (NQITTGKNISPKSNKGSAS) show a composition bias toward polar residues. 465–472 (SGPPGIGK) contributes to the ATP binding site. The segment at 931-1021 (VGESLPEENG…AGGSGGKRKR (91 aa)) is disordered. The span at 945–958 (EGDEEDSSDAENND) shows a compositional bias: acidic residues. The span at 965 to 977 (TKPKLDLQSDKKK) shows a compositional bias: basic and acidic residues. Low complexity predominate over residues 999-1010 (AGRSKASGSAGK). Over residues 1011–1021 (AAGGSGGKRKR) the composition is skewed to gly residues.

Belongs to the activator 1 large subunit family. Heterotetramer of subunits RFC2, RFC3, RFC4 and RFC5 that can form a complex with RFC1. As to expression, expressed in roots, leaves, shoot apical meristem (SAM), flag leaves and panicles.

It is found in the nucleus. Functionally, may be involved in DNA replication and thus regulate cell proliferation. In Oryza sativa subsp. japonica (Rice), this protein is Replication factor C subunit 1 (RFC1).